Reading from the N-terminus, the 111-residue chain is Short neuropeptide F (111 aa).

The first 24 residues, 1–24, serve as a signal peptide directing secretion; sequence MSAMYAKRCAALVLLVVTVGLVNA. A propeptide spanning residues 25–76 is cleaved from the precursor; the sequence is TENYMDYGEEMAEKTPAENIHELYRLLLQRNTLDNAGFGGIPLEHLMIRKSQ. At F85 the chain carries Phenylalanine amide. The propeptide occupies 88–111; that stretch reads SGPHVSARALPRPMGAVAGYDDNN.

As to expression, expressed throughout the central nervous system (at protein level).

The protein localises to the secreted. In terms of biological role, plays a role in controlling food intake and regulating body size. This Camponotus floridanus (Florida carpenter ant) protein is Short neuropeptide F.